Here is a 206-residue protein sequence, read N- to C-terminus: Ras-related protein Rab-14 (206 aa).

15–22 (GDMGVGKS) contacts GTP. Positions 37–45 (SPHTIGVEF) match the Effector region motif. Residues 63-67 (DTAGQ) and 121-124 (NKKD) contribute to the GTP site. Residues 182-206 (PDGGITKNPPQTITDKPQDASKCSC) are disordered. A compositionally biased stretch (polar residues) spans 189–206 (NPPQTITDKPQDASKCSC). Residues C204 and C206 are each lipidated (S-geranylgeranyl cysteine). Position 206 is a cysteine methyl ester (C206).

Belongs to the small GTPase superfamily. Rab family.

Its subcellular location is the endosome. The protein resides in the contractile vacuole. It localises to the membrane. The catalysed reaction is GTP + H2O = GDP + phosphate + H(+). With respect to regulation, rab activation is generally mediated by a guanine exchange factor (GEF), while inactivation through hydrolysis of bound GTP is catalyzed by a GTPase activating protein (GAP). That Rab is activated by the DENND6A and DENND6B guanine exchange factors (GEF). The small GTPases Rab are key regulators of intracellular membrane trafficking, from the formation of transport vesicles to their fusion with membranes. Rabs cycle between an inactive GDP-bound form and an active GTP-bound form that is able to recruit to membranes different set of downstream effectors directly responsible for vesicle formation, movement, tethering and fusion. Regulates the fusion of phagosomes and lysosomes. This Dictyostelium discoideum (Social amoeba) protein is Ras-related protein Rab-14 (rab14).